The sequence spans 244 residues: 3-deoxy-manno-octulosonate cytidylyltransferase (244 aa).

This sequence belongs to the KdsB family.

The protein resides in the cytoplasm. The enzyme catalyses 3-deoxy-alpha-D-manno-oct-2-ulosonate + CTP = CMP-3-deoxy-beta-D-manno-octulosonate + diphosphate. It participates in nucleotide-sugar biosynthesis; CMP-3-deoxy-D-manno-octulosonate biosynthesis; CMP-3-deoxy-D-manno-octulosonate from 3-deoxy-D-manno-octulosonate and CTP: step 1/1. It functions in the pathway bacterial outer membrane biogenesis; lipopolysaccharide biosynthesis. Functionally, activates KDO (a required 8-carbon sugar) for incorporation into bacterial lipopolysaccharide in Gram-negative bacteria. This is 3-deoxy-manno-octulosonate cytidylyltransferase from Anaeromyxobacter sp. (strain Fw109-5).